The primary structure comprises 286 residues: Acetyl-coenzyme A carboxylase carboxyl transferase subunit beta (286 aa).

Positions 28–286 (LMQKCSNCKK…KMHMDGRQLK (259 aa)) constitute a CoA carboxyltransferase N-terminal domain. Zn(2+) contacts are provided by Cys32, Cys35, Cys51, and Cys54. A C4-type zinc finger spans residues 32-54 (CSNCKKIYYRKEMVKALQVCPNC).

The protein belongs to the AccD/PCCB family. In terms of assembly, acetyl-CoA carboxylase is a heterohexamer composed of biotin carboxyl carrier protein (AccB), biotin carboxylase (AccC) and two subunits each of ACCase subunit alpha (AccA) and ACCase subunit beta (AccD). Zn(2+) is required as a cofactor.

The protein localises to the cytoplasm. It carries out the reaction N(6)-carboxybiotinyl-L-lysyl-[protein] + acetyl-CoA = N(6)-biotinyl-L-lysyl-[protein] + malonyl-CoA. It functions in the pathway lipid metabolism; malonyl-CoA biosynthesis; malonyl-CoA from acetyl-CoA: step 1/1. Component of the acetyl coenzyme A carboxylase (ACC) complex. Biotin carboxylase (BC) catalyzes the carboxylation of biotin on its carrier protein (BCCP) and then the CO(2) group is transferred by the transcarboxylase to acetyl-CoA to form malonyl-CoA. In Oceanobacillus iheyensis (strain DSM 14371 / CIP 107618 / JCM 11309 / KCTC 3954 / HTE831), this protein is Acetyl-coenzyme A carboxylase carboxyl transferase subunit beta.